Here is a 40-residue protein sequence, read N- to C-terminus: Photosystem II reaction center protein J (40 aa).

The chain crosses the membrane as a helical span at residues 8-28 (IPLWIIGTVAGILVIGLIGIF).

This sequence belongs to the PsbJ family. As to quaternary structure, PSII is composed of 1 copy each of membrane proteins PsbA, PsbB, PsbC, PsbD, PsbE, PsbF, PsbH, PsbI, PsbJ, PsbK, PsbL, PsbM, PsbT, PsbX, PsbY, PsbZ, Psb30/Ycf12, at least 3 peripheral proteins of the oxygen-evolving complex and a large number of cofactors. It forms dimeric complexes.

It localises to the plastid. It is found in the chloroplast thylakoid membrane. In terms of biological role, one of the components of the core complex of photosystem II (PSII). PSII is a light-driven water:plastoquinone oxidoreductase that uses light energy to abstract electrons from H(2)O, generating O(2) and a proton gradient subsequently used for ATP formation. It consists of a core antenna complex that captures photons, and an electron transfer chain that converts photonic excitation into a charge separation. This is Photosystem II reaction center protein J from Oenothera elata subsp. hookeri (Hooker's evening primrose).